A 1177-amino-acid polypeptide reads, in one-letter code: DNA-directed RNA polymerase subunit beta (1177 aa).

A disordered region spans residues 1 to 36 (MEGCILADSRQSKTAASPSPSRPQSSSNNSVPGAPN). A compositionally biased stretch (low complexity) spans 17–32 (SPSPSRPQSSSNNSVP).

It belongs to the RNA polymerase beta chain family. The RNAP catalytic core consists of 2 alpha, 1 beta, 1 beta' and 1 omega subunit. When a sigma factor is associated with the core the holoenzyme is formed, which can initiate transcription.

It catalyses the reaction RNA(n) + a ribonucleoside 5'-triphosphate = RNA(n+1) + diphosphate. Its function is as follows. DNA-dependent RNA polymerase catalyzes the transcription of DNA into RNA using the four ribonucleoside triphosphates as substrates. This is DNA-directed RNA polymerase subunit beta from Mycobacterium tuberculosis (strain ATCC 25177 / H37Ra).